The following is a 399-amino-acid chain: Acetate kinase (399 aa).

Asn-9 is a binding site for Mg(2+). Lys-16 lines the ATP pocket. Arg-90 contributes to the substrate binding site. Asp-147 functions as the Proton donor/acceptor in the catalytic mechanism. ATP-binding positions include 207 to 211, 282 to 284, and 330 to 334; these read HIGNG, DLR, and GVGEN. A Mg(2+)-binding site is contributed by Glu-384.

Belongs to the acetokinase family. As to quaternary structure, homodimer. Mg(2+) is required as a cofactor. The cofactor is Mn(2+).

The protein localises to the cytoplasm. The enzyme catalyses acetate + ATP = acetyl phosphate + ADP. It functions in the pathway metabolic intermediate biosynthesis; acetyl-CoA biosynthesis; acetyl-CoA from acetate: step 1/2. Its function is as follows. Catalyzes the formation of acetyl phosphate from acetate and ATP. Can also catalyze the reverse reaction. This Staphylococcus saprophyticus subsp. saprophyticus (strain ATCC 15305 / DSM 20229 / NCIMB 8711 / NCTC 7292 / S-41) protein is Acetate kinase.